The following is a 1161-amino-acid chain: Nuclear pore complex-interacting protein family member B11 (1161 aa).

Residues 63–87 (IIIAFPTSYKVVITLWIVYLWVSLL) form a helical membrane-spanning segment. 2 disordered regions span residues 278 to 580 (ADDN…DDNI) and 892 to 1161 (SADD…RRLS). Pro residues predominate over residues 311–321 (PLPPSAPPSAP). Basic and acidic residues-rich tracts occupy residues 368 to 378 (DNIKTTAERLR), 410 to 420 (DNIKTPAEHLR), 452 to 462 (DNIKTPAERLR), 494 to 504 (DNIKTPAEHLR), 536 to 546 (DNIKTTAEHLR), 918 to 928 (DNIKTPAERLR), 960 to 970 (DNIKTPAERLR), 1002 to 1012 (DNIKTPAERLR), and 1044 to 1054 (DNIKTPAERLR).

This sequence belongs to the NPIP family.

The protein resides in the membrane. The chain is Nuclear pore complex-interacting protein family member B11 (NPIPB11) from Homo sapiens (Human).